The primary structure comprises 89 residues: Small ribosomal subunit protein uS15 (89 aa).

The protein belongs to the universal ribosomal protein uS15 family. Part of the 30S ribosomal subunit. Forms a bridge to the 50S subunit in the 70S ribosome, contacting the 23S rRNA.

Functionally, one of the primary rRNA binding proteins, it binds directly to 16S rRNA where it helps nucleate assembly of the platform of the 30S subunit by binding and bridging several RNA helices of the 16S rRNA. In terms of biological role, forms an intersubunit bridge (bridge B4) with the 23S rRNA of the 50S subunit in the ribosome. The protein is Small ribosomal subunit protein uS15 of Streptococcus pyogenes serotype M1.